A 93-amino-acid chain; its full sequence is HIG1 domain family member 1A, mitochondrial (93 aa).

S2 bears the N-acetylserine mark. Residues S2–P93 enclose the HIG1 domain. Residue S8 is modified to Phosphoserine. Helical transmembrane passes span P28 to L48 and G69 to A89. Over K90–P93 the chain is Mitochondrial matrix.

In terms of assembly, associates with cytochrome c oxidase (COX, complex IV); proposed complex component. Also associates with respiratory chain supercomplexes. Expressed in brain and spinal cord.

It localises to the mitochondrion membrane. The protein resides in the mitochondrion inner membrane. Proposed subunit of cytochrome c oxidase (COX, complex IV), which is the terminal component of the mitochondrial respiratory chain that catalyzes the reduction of oxygen to water. May play a role in the assembly of respiratory supercomplexes. This is HIG1 domain family member 1A, mitochondrial (Higd1a) from Rattus norvegicus (Rat).